A 263-amino-acid chain; its full sequence is Peptidoglycan-N-acetylmuramic acid deacetylase PdaA (263 aa).

An N-terminal signal peptide occupies residues 1–23 (MKWMCSICCAAVLLAGGAAQAEA). The 182-residue stretch at 66–247 (KTIYLTFDNG…DLKKQGYTFK (182 aa)) folds into the NodB homology domain. The active-site Proton acceptor is the aspartate 73. Histidine 124 and histidine 128 together coordinate a divalent metal cation. Catalysis depends on histidine 222, which acts as the Proton donor.

It belongs to the polysaccharide deacetylase family.

In terms of biological role, catalyzes the deacetylation of N-acetylmuramic acid (MurNAc) residues in glycan strands of peptidoglycan, leading to the formation of muramic delta-lactam residues in spore cortex, after transpeptidation of deacetylated muramic acid residues. PdaA probably carries out both deacetylation and lactam ring formation and requires the product of CwlD activity on peptidoglycan as a substrate. Is required for germination. Cannot use chitin oligomer (hexa-N-acetylchitohexaose) as a substrate. The chain is Peptidoglycan-N-acetylmuramic acid deacetylase PdaA (pdaA) from Bacillus subtilis (strain 168).